Here is a 298-residue protein sequence, read N- to C-terminus: METSSNLSSMVRLNIGGKKFCTTIDTLTIREPDSMLAAMFSGRHAMCQESKKGYVFIDRDGKHFRHILNWLRDGVIPSLSDPDCSELLREADYYQLLGLKDGIKDSRKEVGEVEAELTRIDIIKCIQTERVRFRGVNLSGIDLSKLDLSLVDFSYACLRNVFFSRTNLQCAKFRNADAEGSIFHNAILRECEFTSANLRGALLAGTNLQSANLQDACLVGCSFCGADLRTAHLQNADLTNANLEGANLEGANLKGAKLSNANFKGANLQRAYLRHVNLREAHMEGANLGGANMTGAIR.

The BTB domain maps to Ser-9 to Ser-80. 4 Pentapeptide repeat domains span residues Glu-129 to Arg-165, Thr-166 to Leu-203, Ala-216 to Gly-255, and Ala-256 to Gly-295.

In terms of assembly, interacts with FH1. In terms of tissue distribution, expressed in all tissues but preferentially in roots and flowers.

The protein operates within protein modification; protein ubiquitination. Functionally, may act as a substrate-specific adapter of an E3 ubiquitin-protein ligase complex (CUL3-RBX1-BTB) which mediates the ubiquitination and subsequent proteasomal degradation of target proteins. This is FH protein interacting protein FIP2 (FIP2) from Arabidopsis thaliana (Mouse-ear cress).